Here is a 409-residue protein sequence, read N- to C-terminus: Isocitrate dehydrogenase [NADP] 1 (409 aa).

NADP(+)-binding residues include lysine 75, threonine 78, threonine 80, and arginine 85. Aspartate 255, aspartate 278, and aspartate 282 together coordinate Mn(2+). Residues glycine 313, threonine 314, valine 315, histidine 318, and asparagine 331 each coordinate NADP(+).

The protein belongs to the isocitrate and isopropylmalate dehydrogenases family. Homodimer. Mg(2+) is required as a cofactor. The cofactor is Mn(2+).

The enzyme catalyses D-threo-isocitrate + NADP(+) = 2-oxoglutarate + CO2 + NADPH. Catalyzes the oxidative decarboxylation of isocitrate to 2-oxoglutarate and carbon dioxide with the concomitant reduction of NADP(+). The chain is Isocitrate dehydrogenase [NADP] 1 (icd) from Mycobacterium bovis (strain ATCC BAA-935 / AF2122/97).